Consider the following 279-residue polypeptide: Small ribosomal subunit protein uS2 (279 aa).

Positions 255–279 (LLAGATTAAPEAAAGEAAAAPEQSS) are disordered.

The protein belongs to the universal ribosomal protein uS2 family.

This chain is Small ribosomal subunit protein uS2, found in Mycolicibacterium gilvum (strain PYR-GCK) (Mycobacterium gilvum (strain PYR-GCK)).